We begin with the raw amino-acid sequence, 828 residues long: Putative dual specificity tyrosine-phosphorylation-regulated kinase 3 homolog (828 aa).

Residues 1–14 (MVGSQEKKNNHIEL) are compositionally biased toward basic and acidic residues. Residues 1 to 26 (MVGSQEKKNNHIELSETPATDKNNLN) are disordered. Positions 17 to 26 (TPATDKNNLN) are enriched in polar residues. The Protein kinase domain occupies 276–589 (YEMLKIIGKG…PSEALKHPWL (314 aa)). ATP-binding positions include 282 to 290 (IGKGSFGQV) and Lys305. Asp402 functions as the Proton acceptor in the catalytic mechanism. Ser616 carries the post-translational modification Phosphoserine.

Belongs to the protein kinase superfamily. CMGC Ser/Thr protein kinase family. MNB/DYRK subfamily. In terms of processing, autophosphorylated on tyrosine residues.

The catalysed reaction is L-seryl-[protein] + ATP = O-phospho-L-seryl-[protein] + ADP + H(+). It catalyses the reaction L-threonyl-[protein] + ATP = O-phospho-L-threonyl-[protein] + ADP + H(+). The enzyme catalyses L-tyrosyl-[protein] + ATP = O-phospho-L-tyrosyl-[protein] + ADP + H(+). This chain is Putative dual specificity tyrosine-phosphorylation-regulated kinase 3 homolog (Dyrk3), found in Drosophila melanogaster (Fruit fly).